Here is an 856-residue protein sequence, read N- to C-terminus: DNA endonuclease RBBP8 (856 aa).

The essential for binding to the MRN complex and for RPA focus formation on DNA damage stretch occupies residues 25-48; the sequence is ELWSKLKECHDKDLQELLMKIGKL. 2 coiled-coil regions span residues 38–87 and 120–141; these read LQEL…EDRL and ITEL…SEQL. Disordered regions lie at residues 143 to 174 and 423 to 456; these read DMQK…DSPL and DSEQ…DKEN. Over residues 156-168 the composition is skewed to acidic residues; it reads ENPADTGDGEDGV. The tract at residues 493–515 is damage-recruitment motif; sequence SSSRTKLTISLVPEKPDTKTILH. The tract at residues 695 to 732 is disordered; the sequence is SPSQSISCKERSDIPSIENKKITSEKEHESKGEPYQKQ. Basic and acidic residues predominate over residues 702-730; sequence CKERSDIPSIENKKITSEKEHESKGEPYQ. A Phosphothreonine modification is found at Thr-806. Position 818 is a phosphothreonine; by ATR (Thr-818).

The protein belongs to the COM1/SAE2/CtIP family. In terms of assembly, homotetramer; formed by antiparallel association of helical extensions protruding from the N-termini of two parallel coiled-coil dimers. Interacts with the MRN complex; the interaction links DNA sensing to resection. Interacts with samhd1. Post-translationally, phosphorylation at Thr-818 by atr promotes recruitment to double-strand breaks (DSBs).

The protein resides in the nucleus. It is found in the chromosome. In terms of biological role, endonuclease that cooperates with the MRE11-RAD50-NBN (MRN) complex in DNA-end resection, the first step of double-strand break (DSB) repair through the homologous recombination (HR) pathway. Functions downstream of the MRN complex and ATM, promotes ATR activation and its recruitment to DSBs in the S/G2 phase facilitating the generation of ssDNA. Specifically promotes the endonuclease activity of the MRN complex to clear DNA ends containing protein adducts: recruited to DSBs by nbn following phosphorylation, and promotes the endonuclease of mre11 to clear protein-DNA adducts and generate clean double-strand break ends. The MRN complex and rbbp8/CtIP are also required for chromosome alignment during metaphase. This chain is DNA endonuclease RBBP8 (rbbp8), found in Xenopus laevis (African clawed frog).